The primary structure comprises 493 residues: Transcript termination protein A18 (493 aa).

The 157-residue stretch at 100-256 folds into the Helicase ATP-binding domain; that stretch reads MIELKRPLYI…NSIINIAKLS (157 aa). Residue 113–120 participates in ATP binding; the sequence is LACGFGKT. The DESH box motif lies at 206 to 209; that stretch reads DESH. The region spanning 309 to 456 is the Helicase C-terminal domain; sequence ILDTLVEEFK…IISLSVDKLG (148 aa).

Belongs to the helicase family. Poxviruses subfamily. Interacts with G2. Might be part of a transcription complex composed at least of G2, A18, and H5.

The protein localises to the virion. In terms of biological role, DNA helicase which seems to act as a postreplicative transcription termination factor. Involved in ATP-dependent release of nascent RNA. Forms a stable complex with single-stranded DNA, and to a lesser extent RNA. The protein is Transcript termination protein A18 of Mus musculus (Mouse).